The chain runs to 391 residues: S-adenosylmethionine synthase (391 aa).

ATP is bound at residue His14. A Mg(2+)-binding site is contributed by Asp16. Glu42 provides a ligand contact to K(+). Residues Glu55 and Gln98 each coordinate L-methionine. Positions 98–108 are flexible loop; it reads QSVDIAIGVDE. ATP contacts are provided by residues 172-174, 238-239, Asp247, 253-254, Ala270, and Lys274; these read DGK, RF, and RK. Asp247 is a binding site for L-methionine. An L-methionine-binding site is contributed by Lys278.

The protein belongs to the AdoMet synthase family. In terms of assembly, homotetramer; dimer of dimers. Mg(2+) serves as cofactor. K(+) is required as a cofactor.

Its subcellular location is the cytoplasm. It carries out the reaction L-methionine + ATP + H2O = S-adenosyl-L-methionine + phosphate + diphosphate. Its pathway is amino-acid biosynthesis; S-adenosyl-L-methionine biosynthesis; S-adenosyl-L-methionine from L-methionine: step 1/1. Functionally, catalyzes the formation of S-adenosylmethionine (AdoMet) from methionine and ATP. The overall synthetic reaction is composed of two sequential steps, AdoMet formation and the subsequent tripolyphosphate hydrolysis which occurs prior to release of AdoMet from the enzyme. This chain is S-adenosylmethionine synthase, found in Clostridium botulinum (strain Okra / Type B1).